The chain runs to 380 residues: Rab9 effector protein with kelch motifs (380 aa).

Kelch repeat units follow at residues 57 to 103, 108 to 154, 159 to 211, 212 to 258, 262 to 311, and 357 to 380; these read KIFI…FLPS, SIWV…TSSA, QLYV…AAGT, KLFI…AAVA, HVYM…VIPW, and LCFVFGGMNTEGEVYDDCLVTVVD.

In terms of assembly, interacts with PIKFYVE; the interaction recruits RABEPK to the endosomal membrane. Interacts with RAB9 in its GTP-bound conformation. In terms of processing, phosphorylated on Ser residues by PIKFYVE.

It is found in the cytoplasm. Its subcellular location is the endosome membrane. Functionally, rab9 effector required for endosome to trans-Golgi network (TGN) transport. The protein is Rab9 effector protein with kelch motifs of Mus musculus (Mouse).